Consider the following 32-residue polypeptide: Alpha-conotoxin RgIA (32 aa).

Residues 1 to 19 constitute a propeptide that is removed on maturation; it reads SNKRKNAAMLDMIAQHAIR. 2 cysteine pairs are disulfide-bonded: cysteine 21–cysteine 27 and cysteine 22–cysteine 31.

Belongs to the conotoxin A superfamily. In terms of processing, the disulfide bond CysI-CysIII is important for alpha-9-alpha-10 subtype inhibition, whereas the bond CysII-CysIV contributes to GABA(B) modulation. As to expression, expressed by the venom duct.

Its subcellular location is the secreted. In terms of biological role, this toxin target two types of receptors, the nicotinic acetylcholine receptor (nAChR) and the G-protein-coupled receptor GABA(B). It specifically inhibits the alpha-9-alpha-10/CHRNA9-CHRNA10 nAChR, with preference for rat receptors. It interacts with the alpha-10(+)/alpha-9(-)interface of the receptor. It shows a two order of magnitude species difference potency for the rat versus human alpha-9-alpha-10 nAChR, due to the Thr-86 located in the alpha-9 nAChR subunit. This toxin also shows inhibition of high voltage-activated (HVA) calcium channels (Cav2.2) by acting on GABA(B) receptors (GABBR1 and GABBR2). In vivo, this toxin produces an acute antinociceptive effect in peripheral nerve-injured rats, which may be related to the inhibition of immune cell buildup at the site of nerve injury. In addition, when intramuscularly injected into rats following chronic constriction injury of the sciatic nerve, this toxin protects peripheral nervous tissues as well as prevents central maladaptive plasticity by inhibiting glial cell activation. In Conus regius (Crown cone), this protein is Alpha-conotoxin RgIA.